A 128-amino-acid chain; its full sequence is Glycine cleavage system H protein (128 aa).

The Lipoyl-binding domain maps to 22–104 (VATVGITEHA…YGEGWIFKMK (83 aa)). At lysine 63 the chain carries N6-lipoyllysine.

This sequence belongs to the GcvH family. The glycine cleavage system is composed of four proteins: P, T, L and H. (R)-lipoate serves as cofactor.

Functionally, the glycine cleavage system catalyzes the degradation of glycine. The H protein shuttles the methylamine group of glycine from the P protein to the T protein. The sequence is that of Glycine cleavage system H protein from Methylacidiphilum infernorum (isolate V4) (Methylokorus infernorum (strain V4)).